The sequence spans 243 residues: Uroporphyrinogen-III C-methyltransferase (243 aa).

S-adenosyl-L-homocysteine contacts are provided by residues Pro12, 88 to 90, 118 to 119, Met166, and Ala195; these read SGD and ST.

This sequence belongs to the precorrin methyltransferase family.

It carries out the reaction uroporphyrinogen III + 2 S-adenosyl-L-methionine = precorrin-2 + 2 S-adenosyl-L-homocysteine + H(+). It functions in the pathway cofactor biosynthesis; adenosylcobalamin biosynthesis; precorrin-2 from uroporphyrinogen III: step 1/1. It participates in porphyrin-containing compound metabolism; siroheme biosynthesis; precorrin-2 from uroporphyrinogen III: step 1/1. Functionally, catalyzes the two successive C-2 and C-7 methylation reactions involved in the conversion of uroporphyrinogen III to precorrin-2 via the intermediate formation of precorrin-1. It is a step in the biosynthesis of both cobalamin (vitamin B12) and siroheme. This chain is Uroporphyrinogen-III C-methyltransferase, found in Synechococcus elongatus (strain ATCC 33912 / PCC 7942 / FACHB-805) (Anacystis nidulans R2).